A 422-amino-acid chain; its full sequence is MRIRVDLKVDEIPRYWYNVLSDLPFKLDPPLDPKTKQPISPDMLSAIFPMPLIEQEVTDKREIPIPEPVLEEYAVFRPTPLFRATYLEEFLQTPARIYYKYEGASPTGSHKTNTALAQAYYNKISGTERLVTETGAGQWGSALCYSGAKFGLKVNVFMVKISYEQKPMRKYLMRLFDGDVVPSPSEKTSFGKSILASNSENPGSLGIAISEAIEITLSDSRTKYSLGSVLNHVLLHQTVIGLELKKQLEVLGEKPDVILGCHGGGSNFGGTVLPFIPDKLSGKEIKFVACEPTACPSLTRGRYDYDYGDTAGMTPLLKMYTLGKDFIPPKIHAGGLRYHGAAPIISRLVKEGLIEAVAFDQDEIFSAAKLFAKLEGIVPAPESSYAIAGAIREAKKAKEHNIPRVVVFNLSGHGLFDLTAYI.

At Lys111 the chain carries N6-(pyridoxal phosphate)lysine.

This sequence belongs to the TrpB family. In terms of assembly, tetramer of two alpha and two beta chains. Pyridoxal 5'-phosphate serves as cofactor.

It catalyses the reaction (1S,2R)-1-C-(indol-3-yl)glycerol 3-phosphate + L-serine = D-glyceraldehyde 3-phosphate + L-tryptophan + H2O. The protein operates within amino-acid biosynthesis; L-tryptophan biosynthesis; L-tryptophan from chorismate: step 5/5. In terms of biological role, the beta subunit is responsible for the synthesis of L-tryptophan from indole and L-serine. The chain is Tryptophan synthase beta chain from Pseudothermotoga lettingae (strain ATCC BAA-301 / DSM 14385 / NBRC 107922 / TMO) (Thermotoga lettingae).